Reading from the N-terminus, the 126-residue chain is Protein chibby homolog 1 (126 aa).

Positions 1 to 10 (MPFFGNTFSP) are enriched in polar residues. Residues 1–26 (MPFFGNTFSPKKTPPRKSASLSNLHS) form a disordered region. Phosphoserine is present on residues S9 and S20. The segment at 60-112 (IAETGVSGGVDRREVQRLRRRNQQLEEENNLLRLKVDILLDMLSESTAESHLM) is minimal region for the interaction with PKD2. Residues 67–125 (GGVDRREVQRLRRRNQQLEEENNLLRLKVDILLDMLSESTAESHLMEKELDELRISRKR) adopt a coiled-coil conformation. A leucine-zipper; mediates homodimerization region spans residues 77-98 (LRRRNQQLEEENNLLRLKVDIL).

The protein belongs to the chibby family. In terms of assembly, homodimer. Homodimerization is essential for nuclear localization and interaction with KPNA4 but is dispensable for interaction with CTNNB1. Interacts with polycystin-2/PKD2 and GM130. Interacts with the C-terminal region of CTNNB1. Interacts (C-terminus) with TCIM (C-terminus), TCIM competes with CTNNB1 for the interaction with CBY1. Interacts with FAM92A; this interaction facilitates targeting of FAM92A to cilium basal body. Interacts with CIBAR2. Interacts with KPNA4. In terms of tissue distribution, widely expressed. Expressed at higher levels in heart, skeletal muscle, kidney and placenta. Also found in brain, lung, liver and testis. Significantly down-regulated in thyroid and metastatic uterine tumors.

Its subcellular location is the nucleus speckle. It is found in the cytoplasm. The protein resides in the cytoskeleton. The protein localises to the cilium basal body. It localises to the microtubule organizing center. Its subcellular location is the centrosome. It is found in the centriole. The protein resides in the golgi apparatus. The protein localises to the trans-Golgi network. It localises to the cell projection. Its subcellular location is the cilium. It is found in the flagellum. The protein resides in the nucleus. In terms of biological role, inhibits the Wnt/Wingless pathway by binding to CTNNB1/beta-catenin and inhibiting beta-catenin-mediated transcriptional activation through competition with TCF/LEF transcription factors. Has also been shown to play a role in regulating the intracellular trafficking of polycystin-2/PKD2 and possibly of other intracellular proteins. Promotes adipocyte and cardiomyocyte differentiation. This Homo sapiens (Human) protein is Protein chibby homolog 1 (CBY1).